A 102-amino-acid chain; its full sequence is NADH-quinone oxidoreductase subunit K 1 (102 aa).

Helical transmembrane passes span 5–25 (LYEV…CVVA), 30–50 (VIMM…TFVG), and 62–82 (VFSL…LAMV).

The protein belongs to the complex I subunit 4L family. NDH-1 is composed of 14 different subunits. Subunits NuoA, H, J, K, L, M, N constitute the membrane sector of the complex.

The protein localises to the cell inner membrane. The enzyme catalyses a quinone + NADH + 5 H(+)(in) = a quinol + NAD(+) + 4 H(+)(out). In terms of biological role, NDH-1 shuttles electrons from NADH, via FMN and iron-sulfur (Fe-S) centers, to quinones in the respiratory chain. The immediate electron acceptor for the enzyme in this species is believed to be ubiquinone. Couples the redox reaction to proton translocation (for every two electrons transferred, four hydrogen ions are translocated across the cytoplasmic membrane), and thus conserves the redox energy in a proton gradient. This chain is NADH-quinone oxidoreductase subunit K 1, found in Citrifermentans bemidjiense (strain ATCC BAA-1014 / DSM 16622 / JCM 12645 / Bem) (Geobacter bemidjiensis).